Here is a 418-residue protein sequence, read N- to C-terminus: Mitochondrial outer membrane protein SLC25A46 (418 aa).

Phosphoserine occurs at positions 32 and 35. Thr45 bears the Phosphothreonine mark. Residues 46–96 (PPDIPGSRNLHWGEKSPSYGVPSAPPTLEGSAEEPFPGGGEGPRPGPSSEQ) form a disordered region. A Solcar 1 repeat occupies 96–187 (QLNRFAGFGI…GIISEFTPLP (92 aa)). 6 helical membrane-spanning segments follow: residues 103–123 (FGIGLASLFTENVLAHPCIVL), 167–187 (FIVQGVTLGAEGIISEFTPLP), 202–222 (HLLLKCLTYMVAMPFYSASLI), 258–278 (LLPLFSLIFPTVLHGVLHYII), 314–334 (FPELIANFAASLCSDVILYPL), and 382–402 (VFGFYKGFGAVIIQYTLHATI). One copy of the Solcar 2 repeat lies at 311–413 (DAYFPELIAN…QITKMIYSTL (103 aa)).

It belongs to the mitochondrial carrier (TC 2.A.29) family. Associates with the mitochondrial contact site and cristae organizing system (MICOS) complex. May associate with the endoplasmic reticulum membrane protein complex (EMC).

It localises to the mitochondrion outer membrane. In terms of biological role, transmembrane protein of the mitochondrial outer membrane that controls mitochondrial organization. May regulate the assembly of the MICOS (mitochondrial contact site and cristae organizing system) complex which is essential to the biogenesis and dynamics of mitochondrial cristae, the inwards folds of the inner mitochondrial membrane. Through its interaction with the EMC (endoplasmic reticulum membrane protein complex), could regulate mitochondrial lipid homeostasis and thereby mitochondrial fission. The polypeptide is Mitochondrial outer membrane protein SLC25A46 (Mus musculus (Mouse)).